We begin with the raw amino-acid sequence, 1921 residues long: Putative callose synthase 6 (1921 aa).

The interval 1–23 (MEASSSGTAELPRSLSRRAPSRA) is disordered. The Cytoplasmic segment spans residues 1-492 (MEASSSGTAE…FWNLFRDFDR (492 aa)). Residues 493–513 (MWIFLVMAFQAMVIVGWHGSG) traverse the membrane as a helical segment. The Extracellular segment spans residues 514 to 526 (SLGDIFDKDVFKT). The chain crosses the membrane as a helical span at residues 527–547 (VLTIFITSAYLTLLQAALDII). Residues 548–560 (LNFNAWKNFKFSQ) are Cytoplasmic-facing. The helical transmembrane segment at 561-581 (ILRYLLKFAVAFMWAVLLPIA) threads the bilayer. At 582–611 (YSKSVQRPTGVVKFFSTWTGDWKDQSFYTY) the chain is on the extracellular side. Residues 612–632 (AVSFYVLPNILAALLFLVPPF) traverse the membrane as a helical segment. Over 633 to 674 (RRAMECSDMRPIKVIMWWAQPKLYVGRGMHEDMFSLFKYTTF) the chain is Cytoplasmic. A helical transmembrane segment spans residues 675-695 (WIMLLISKLAFNYYVEILPLI). The Extracellular portion of the chain corresponds to 696–721 (TPTKMIMNLHIGHYQWHEFFPHATNN). Residues 722–742 (IGVVIAIWAPIVLVYLMDTQI) form a helical membrane-spanning segment. Residues 743 to 1484 (WYAIFSTLFG…FDFYRMLSFY (742 aa)) lie on the Cytoplasmic side of the membrane. The helical transmembrane segment at 1485–1505 (FTTIGFYFSSMLTVLTVYAFL) threads the bilayer. Residues 1506-1540 (YGRMYMVMSGLEKEILRLASPNQLEALEQALATQS) are Extracellular-facing. Residues 1541–1561 (IFQLGFLMVLPMVMEIGLEHG) traverse the membrane as a helical segment. At 1562–1564 (FRS) the chain is on the cytoplasmic side. The chain crosses the membrane as a helical span at residues 1565 to 1585 (AIVDFFIMQLQLASVFFTFQL). Residues 1586–1628 (GTKSHYYGRTILHGGSKYRPTGRGFVVFHAKFAENYRLYSRSH) lie on the Extracellular side of the membrane. A helical membrane pass occupies residues 1629–1649 (FVKGLELLLLLVVYQIYGHSY). Residues 1650–1655 (RSSNLY) lie on the Cytoplasmic side of the membrane. Residues 1656–1676 (LYITVSMWFMVGSWLFAPFIF) traverse the membrane as a helical segment. The Extracellular segment spans residues 1677–1730 (NPSGFEWQKTVDDWTDWKRWLGDRGGIGIPVEKSWESWWNVEQEHLKHTSIRGR). A helical transmembrane segment spans residues 1731-1751 (ILEITLALRFFIYQYGIVYQL). Over 1752 to 1759 (NISQRSKS) the chain is Cytoplasmic. A helical transmembrane segment spans residues 1760–1780 (FLVYGLSWVVLLTSLLVLKMV). Residues 1781–1796 (SMGRRRFGTDFQLMFR) lie on the Extracellular side of the membrane. The chain crosses the membrane as a helical span at residues 1797 to 1817 (ILKALLFLGFLSVMTILFVVF). The Cytoplasmic segment spans residues 1818–1823 (KLTLTD). The chain crosses the membrane as a helical span at residues 1824–1844 (LSASVLAFLPTGWAILLIGQV). Residues 1845–1867 (LRSPIKALGVWDSVKELGRAYEN) lie on the Extracellular side of the membrane. The helical transmembrane segment at 1868 to 1888 (IMGLVIFAPIAVLSWFPIVSE) threads the bilayer. The Cytoplasmic portion of the chain corresponds to 1889–1921 (FQARLLFNQAFSRGLQISMILAGRKDKATSSHK).

The protein belongs to the glycosyltransferase 48 family.

It localises to the cell membrane. The catalysed reaction is [(1-&gt;3)-beta-D-glucosyl](n) + UDP-alpha-D-glucose = [(1-&gt;3)-beta-D-glucosyl](n+1) + UDP + H(+). Probably involved in callose synthesis, but not required for callose formation after wounding or pathogen attack. During plant growth and development, callose is found as a transitory component of the cell plate in dividing cells, is a major component of pollen mother cell walls and pollen tubes, and is found as a structural component of plasmodesmatal canals. This Arabidopsis thaliana (Mouse-ear cress) protein is Putative callose synthase 6 (CALS6).